The following is a 422-amino-acid chain: Putative serpin-Z8 (422 aa).

Positions 369–393 are RCL; sequence GTVAAAATMTRMLPSGVPPPPVDFV.

This sequence belongs to the serpin family.

In terms of biological role, probable serine protease inhibitor. This is Putative serpin-Z8 from Oryza sativa subsp. japonica (Rice).